Here is a 202-residue protein sequence, read N- to C-terminus: GTP cyclohydrolase 1 (202 aa).

Positions 90, 93, and 163 each coordinate Zn(2+).

It belongs to the GTP cyclohydrolase I family. In terms of assembly, toroid-shaped homodecamer, composed of two pentamers of five dimers.

The enzyme catalyses GTP + H2O = 7,8-dihydroneopterin 3'-triphosphate + formate + H(+). It functions in the pathway cofactor biosynthesis; 7,8-dihydroneopterin triphosphate biosynthesis; 7,8-dihydroneopterin triphosphate from GTP: step 1/1. This chain is GTP cyclohydrolase 1 (folE), found in Mycobacterium bovis (strain ATCC BAA-935 / AF2122/97).